Here is a 431-residue protein sequence, read N- to C-terminus: Putative helicase 055L (431 aa).

One can recognise a Helicase ATP-binding domain in the interval 73 to 222; the sequence is WGHVTSKGYC…ALGAFFGRED (150 aa). Residue 86–93 participates in ATP binding; the sequence is CPPGFGKT. Residues 175–178 carry the DEAH box motif; that stretch reads DEAH. The segment at 403 to 431 is disordered; that stretch reads KCDASRPSQSTPTPTGSSQPAPRTRRPQR. Residues 407-424 show a composition bias toward low complexity; that stretch reads SRPSQSTPTPTGSSQPAP.

This Frog virus 3 (isolate Goorha) (FV-3) protein is Putative helicase 055L.